Consider the following 391-residue polypeptide: Protein Wnt-2b (391 aa).

5 disulfides stabilise this stretch: C107–C118, C158–C166, C168–C188, C237–C251, and C239–C246. N117 carries an N-linked (GlcNAc...) asparagine glycan. A lipid anchor (O-palmitoleoyl serine; by PORCN) is attached at S243. An N-linked (GlcNAc...) asparagine glycan is attached at N283. 6 cysteine pairs are disulfide-bonded: C309–C340, C325–C335, C339–C379, C355–C370, C357–C367, and C362–C363.

The protein belongs to the Wnt family. Forms a soluble 1:1 complex with AFM; this prevents oligomerization and is required for prolonged biological activity. The complex with AFM may represent the physiological form in body fluids. Interacts with FZD4 and FZD5. Palmitoleoylation is required for efficient binding to frizzled receptors. Depalmitoleoylation leads to Wnt signaling pathway inhibition. Isoform 1 is expressed in adult heart, brain, placenta, lung, prostate, testis, ovary, small intestine and colon. In the adult brain, it is mainly found in the caudate nucleus, subthalamic nucleus and thalamus. Also detected in fetal brain, lung and kidney. Isoform 2 is expressed in fetal brain, fetal lung, fetal kidney, caudate nucleus, testis and cancer cell lines.

The protein localises to the secreted. Its subcellular location is the extracellular space. It is found in the extracellular matrix. Ligand for members of the frizzled family of seven transmembrane receptors. Functions in the canonical Wnt/beta-catenin signaling pathway. Plays a redundant role in embryonic lung development. This Homo sapiens (Human) protein is Protein Wnt-2b (WNT2B).